The primary structure comprises 247 residues: Trypsin (247 aa).

Positions 1 to 21 (LTTVISYFALVAFALVGVSYA) are cleaved as a signal peptide. A propeptide spans 22-30 (TPKASINGR) (activation peptide). Positions 31-247 (IVGGEMTDIS…QSNFPGVYGI (217 aa)) constitute a Peptidase S1 domain. A disulfide bridge links Cys-61 with Cys-77. Catalysis depends on charge relay system residues His-76 and Asp-120. Intrachain disulfides connect Cys-185–Cys-201 and Cys-212–Cys-236. The active-site Charge relay system is the Ser-216.

It belongs to the peptidase S1 family. Midgut.

It is found in the secreted. Its subcellular location is the extracellular space. It carries out the reaction Preferential cleavage: Arg-|-Xaa, Lys-|-Xaa.. This is Trypsin from Simulium vittatum (Striped black fly).